A 329-amino-acid polypeptide reads, in one-letter code: Malate dehydrogenase (329 aa).

11–17 (GAAGQIG) is a binding site for NAD(+). Substrate-binding residues include R92 and R98. NAD(+) is bound by residues N105, Q112, and 129–131 (VGN). 2 residues coordinate substrate: N131 and R165. H190 (proton acceptor) is an active-site residue.

This sequence belongs to the LDH/MDH superfamily. MDH type 2 family.

The catalysed reaction is (S)-malate + NAD(+) = oxaloacetate + NADH + H(+). Catalyzes the reversible oxidation of malate to oxaloacetate. This Laribacter hongkongensis (strain HLHK9) protein is Malate dehydrogenase.